The following is a 411-amino-acid chain: Argininosuccinate lyase (411 aa).

It belongs to the lyase 1 family. Argininosuccinate lyase subfamily.

The protein localises to the cytoplasm. It carries out the reaction 2-(N(omega)-L-arginino)succinate = fumarate + L-arginine. Its pathway is amino-acid biosynthesis; L-arginine biosynthesis; L-arginine from L-ornithine and carbamoyl phosphate: step 3/3. This is Argininosuccinate lyase from Legionella pneumophila (strain Paris).